The chain runs to 336 residues: Atypical chemokine receptor 1 (336 aa).

Residues 1–63 are Extracellular-facing; sequence MGNCLHQAEL…CNLLDDSSLP (63 aa). Asn-16, Asn-27, and Asn-33 each carry an N-linked (GlcNAc...) asparagine glycan. Cystine bridges form between Cys-51-Cys-276 and Cys-129-Cys-195. Residues 64 to 84 traverse the membrane as a helical segment; that stretch reads FFILASVLGILASSTVLFLLF. Residues 85–95 lie on the Cytoplasmic side of the membrane; sequence RPLFRWQLCPG. Residues 96–116 form a helical membrane-spanning segment; it reads WPVLAQLAVGSTLFSIVVPIL. Topologically, residues 117 to 129 are extracellular; that stretch reads APGLGNTRSSAPC. The helical transmembrane segment at 130-153 threads the bilayer; it reads SLGYCVWYGSAFAQALLLGCHASL. The Cytoplasmic segment spans residues 154 to 166; it reads GPKLGAGQVPGLT. Residues 167 to 187 form a helical membrane-spanning segment; that stretch reads LGLSVGLWGAAALLTLPITLA. Residues 188 to 207 are Extracellular-facing; the sequence is SDASDGLCTPIYSTELKALQ. Residues 208-228 form a helical membrane-spanning segment; the sequence is ATHTVACFAIFVLLPLGLFGA. Residues 229 to 244 lie on the Cytoplasmic side of the membrane; the sequence is KGLKKVLGMGPGPWMN. The helical transmembrane segment at 245–265 threads the bilayer; sequence ILWVWFIFWWPHGVVLGLDFL. Residues 266–287 are Extracellular-facing; it reads VRSKLLLLPTCLAQQVLDLLLN. Residues 288 to 308 traverse the membrane as a helical segment; that stretch reads LAEALAIVHCVATPLLLALFC. Topologically, residues 309–336 are cytoplasmic; sequence HQATRTLVPSLPLPERWSSPVDTLGSKS.

Belongs to the G-protein coupled receptor 1 family. Atypical chemokine receptor subfamily.

Its subcellular location is the early endosome. The protein resides in the recycling endosome. It is found in the membrane. In terms of biological role, atypical chemokine receptor that controls chemokine levels and localization via high-affinity chemokine binding that is uncoupled from classic ligand-driven signal transduction cascades, resulting instead in chemokine sequestration, degradation, or transcytosis. Also known as interceptor (internalizing receptor) or chemokine-scavenging receptor or chemokine decoy receptor. Has a promiscuous chemokine-binding profile, interacting with inflammatory chemokines of both the CXC and the CC subfamilies but not with homeostatic chemokines. Acts as a receptor for chemokines including CCL2, CCL5, CCL7, CCL11, CCL13, CCL14, CCL17, CXCL5, CXCL6, IL8/CXCL8, CXCL11, GRO, RANTES, MCP-1 and TARC. May regulate chemokine bioavailability and, consequently, leukocyte recruitment through two distinct mechanisms: when expressed in endothelial cells, it sustains the abluminal to luminal transcytosis of tissue-derived chemokines and their subsequent presentation to circulating leukocytes; when expressed in erythrocytes, serves as blood reservoir of cognate chemokines but also as a chemokine sink, buffering potential surges in plasma chemokine levels. This chain is Atypical chemokine receptor 1 (ACKR1), found in Saguinus imperator (Emperor tamarin).